Here is an 805-residue protein sequence, read N- to C-terminus: Acetyl-CoA decarbonylase/synthase complex subunit alpha 3 (805 aa).

C72, C75, C76, C78, C83, and C93 together coordinate [4Fe-4S] cluster. H116 is a CO binding site. 3 residues coordinate [Ni-4Fe-4S] cluster: H249, C277, and C322. 4Fe-4S ferredoxin-type domains follow at residues 407 to 435 (EEFK…IPEA) and 445 to 474 (EYLE…LNVL). C416, C419, C422, C426, C454, C457, C460, and C464 together coordinate [4Fe-4S] cluster. [Ni-4Fe-4S] cluster-binding residues include C522, C551, and C586.

The protein belongs to the Ni-containing carbon monoxide dehydrogenase family. As to quaternary structure, heterotetramer of two alpha and two epsilon subunits. The ACDS complex is made up of alpha, epsilon, beta, gamma and delta subunits with a probable stoichiometry of (alpha(2)epsilon(2))(4)-beta(8)-(gamma(1)delta(1))(8). The cofactor is [4Fe-4S] cluster. Requires [Ni-4Fe-4S] cluster as cofactor.

It carries out the reaction CO + 2 oxidized [2Fe-2S]-[ferredoxin] + H2O = 2 reduced [2Fe-2S]-[ferredoxin] + CO2 + 2 H(+). The protein operates within one-carbon metabolism; methanogenesis from acetate. Its function is as follows. Part of the ACDS complex that catalyzes the reversible cleavage of acetyl-CoA, allowing growth on acetate as sole source of carbon and energy. The alpha-epsilon subcomponent functions as a carbon monoxide dehydrogenase. This chain is Acetyl-CoA decarbonylase/synthase complex subunit alpha 3, found in Methanosarcina acetivorans (strain ATCC 35395 / DSM 2834 / JCM 12185 / C2A).